The primary structure comprises 267 residues: Methylglyoxal reductase DkgB (267 aa).

Tyr39 serves as the catalytic Proton donor. His97 is a substrate binding site. 179 to 231 serves as a coordination point for NADP(+); that stretch reads MTLAYGKALKDEVIARIAAKHNATPAQVILAWAMGEGYSVIPSSTKRENLESN.

It belongs to the aldo/keto reductase family. As to quaternary structure, monomer.

The protein resides in the cytoplasm. The catalysed reaction is hydroxyacetone + NADP(+) = methylglyoxal + NADPH + H(+). Aldo-keto reductase that significantly contributes to cellular methylglyoxal detoxification by catalyzing the NADPH-dependent conversion of methylglyoxal to acetol. This Escherichia coli O157:H7 protein is Methylglyoxal reductase DkgB.